The sequence spans 260 residues: Troponin I 3 (260 aa).

Residues 192–219 (DLDEIMAKKKGTADGKPEWSKKEKKEEE) show a composition bias toward basic and acidic residues. The disordered stretch occupies residues 192–260 (DLDEIMAKKK…EEEEEEEEEE (69 aa)). A compositionally biased stretch (acidic residues) spans 231–260 (PEAEPEPEAAEPAAEEPEAEEEEEEEEEEE).

The protein belongs to the troponin I family. Expressed in body wall muscle from first larval stage to adult. In adults expression is predominantly in vulval and anal muscles, body wall muscle expression is weaker. Also expressed in vulval muscles of hermaphrodites and the sex muscles of males.

In terms of biological role, troponin I is the inhibitory subunit of troponin, the thin filament regulatory complex which confers calcium-sensitivity to muscle actomyosin ATPase activity. This chain is Troponin I 3 (tni-3), found in Caenorhabditis elegans.